A 234-amino-acid chain; its full sequence is Zein-alpha GZ19AB11 (234 aa).

Residues 1-21 (MAAKIFCLLMLLGLSASAATA) form the signal peptide.

This sequence belongs to the zein family.

In terms of biological role, zeins are major seed storage proteins. This Zea mays (Maize) protein is Zein-alpha GZ19AB11.